The primary structure comprises 390 residues: Manganese peroxidase 2 (390 aa).

Positions 1 to 23 (MAFNFAAILAFVSLAAVTSAAPS) are cleaved as a signal peptide. 5 disulfide bridges follow: C27–C39, C38–C313, C57–C141, C277–C343, and C365–C372. Mn(2+) is bound by residues E59 and E63. The active-site Proton acceptor is the H70. Ca(2+)-binding residues include D71, G86, D88, and S90. Residue N155 is glycosylated (N-linked (GlcNAc...) asparagine). H197 contacts heme b. S198 contacts Ca(2+). D203 is a binding site for Mn(2+). Positions 215, 217, and 222 each coordinate Ca(2+). N-linked (GlcNAc...) asparagine glycosylation is present at N241.

This sequence belongs to the peroxidase family. Ligninase subfamily. The cofactor is heme b. Requires Ca(2+) as cofactor.

Its subcellular location is the secreted. The catalysed reaction is 2 Mn(2+) + H2O2 + 2 H(+) = 2 Mn(3+) + 2 H2O. Its function is as follows. Catalyzes the oxidation of Mn(2+) to Mn(3+). The latter, acting as a diffusible redox mediator, is capable of oxidizing a variety of lignin compounds. In Phlebia radiata (White-rot fungus), this protein is Manganese peroxidase 2 (mnp2).